The chain runs to 575 residues: Muellerian-inhibiting factor (575 aa).

The first 24 residues, 1-24, serve as a signal peptide directing secretion; that stretch reads MPGPSLSLALVLSAMGALLRPGTP. Residues 25-466 constitute a propeptide that is removed on maturation; sequence REEVFSTSAL…ERSGSARAQR (442 aa). Asn78 and Asn344 each carry an N-linked (GlcNAc...) asparagine glycan. Disulfide bonds link Cys477–Cys541, Cys503–Cys572, and Cys507–Cys574.

It belongs to the TGF-beta family. As to quaternary structure, homodimer; disulfide-linked. Post-translationally, preproprotein is proteolytically processed to generate N- and C-terminal cleavage products that homodimerize and associate to form a biologically active non-covalent complex. Binding of the non-covalent complex to AMHR2 induces dissociation of the pro-region from the mature C-terminal dimer. The N-terminal portion of the protein, despite having no intrinsic activity, has the role of amplifying the activity of the C-terminus. In terms of tissue distribution, expressed in fetal testis and adult ovaries.

It is found in the secreted. Its function is as follows. Plays an important role in several reproductive functions. Induces Muellerian duct regression during male fetal sexual differentiation and plays a role in Leydig cell differentiation and function. In female acts as a negative regulator of the primordial to primary follicle transition and decreases FSH sensitivity of growing follicles. AMH signals by binding to a specific type-II receptor, AMHR2, that heterodimerizes with type-I receptors (ACVR1 and BMPR1A), and recruiting SMAD proteins that are translocated to the nucleus to regulate target gene expression. In Bos taurus (Bovine), this protein is Muellerian-inhibiting factor (AMH).